Here is a 749-residue protein sequence, read N- to C-terminus: Homeobox-leucine zipper protein ROC7 (749 aa).

Positions 26-98 are disordered; sequence LDQHQQHQHQ…KKRYHRHTQH (73 aa). Residues 46–57 show a composition bias toward basic and acidic residues; sequence SDGRAPRDELEM. Positions 68-78 are enriched in gly residues; sequence SGGGGGGGGSG. The span at 86–97 shows a compositional bias: basic residues; it reads RPRKKRYHRHTQ. The homeobox DNA-binding region spans 88–147; sequence RKKRYHRHTQHQIQELEAFFKECPHPDDKQRKELSRELGLEPLQVKFWFQNKRTQMKTQH. The stretch at 137-218 forms a coiled coil; sequence QNKRTQMKTQ…DRISAIAAKY (82 aa). Residues 256-494 form the START domain; it reads ADFDKPLVIE…LERQCERLAS (239 aa).

Belongs to the HD-ZIP homeobox family. Class IV subfamily.

It localises to the nucleus. Its function is as follows. Probable transcription factor. The protein is Homeobox-leucine zipper protein ROC7 (ROC7) of Oryza sativa subsp. indica (Rice).